The primary structure comprises 243 residues: Triosephosphate isomerase (243 aa).

9-11 (NWK) is a substrate binding site. The active-site Electrophile is His-98. Glu-167 acts as the Proton acceptor in catalysis. Residues Gly-173, Ser-205, and 226–227 (GG) contribute to the substrate site.

This sequence belongs to the triosephosphate isomerase family. In terms of assembly, homodimer.

The protein localises to the cytoplasm. The enzyme catalyses D-glyceraldehyde 3-phosphate = dihydroxyacetone phosphate. It functions in the pathway carbohydrate biosynthesis; gluconeogenesis. The protein operates within carbohydrate degradation; glycolysis; D-glyceraldehyde 3-phosphate from glycerone phosphate: step 1/1. In terms of biological role, involved in the gluconeogenesis. Catalyzes stereospecifically the conversion of dihydroxyacetone phosphate (DHAP) to D-glyceraldehyde-3-phosphate (G3P). This is Triosephosphate isomerase from Mesomycoplasma hyorhinis (Mycoplasma hyorhinis).